Reading from the N-terminus, the 313-residue chain is MLANIIRIATRQSPLALWQARYVQQCLNHFYPDLHVELVPMVTRGDIILDTPLAKVGGKGLFVKELELALLEGRADIAVHSMKDVPVEFPDGLGLTTICERDDPRDAFVSNRYDSLEQLPEGSCVGTSSLRRQCQLRARRPDLVIRDLRGNVGTRLAKLDNGEYDAIILAVAGLKRLGLEERIRCALSPEESLPAVGQGAIGIECRLDDDRIRQLLAPLNHTDTAARVLAERAMNVRLEGGCQVPIGSYAELEGDTLWLRALVGAPDGSQMIVGERKGSVSDAEKIGVALAEELLAKGASAILQAVYQGQSSS.

C242 bears the S-(dipyrrolylmethanemethyl)cysteine mark.

It belongs to the HMBS family. In terms of assembly, monomer. Requires dipyrromethane as cofactor.

The catalysed reaction is 4 porphobilinogen + H2O = hydroxymethylbilane + 4 NH4(+). It functions in the pathway porphyrin-containing compound metabolism; protoporphyrin-IX biosynthesis; coproporphyrinogen-III from 5-aminolevulinate: step 2/4. Tetrapolymerization of the monopyrrole PBG into the hydroxymethylbilane pre-uroporphyrinogen in several discrete steps. The sequence is that of Porphobilinogen deaminase from Pectobacterium atrosepticum (strain SCRI 1043 / ATCC BAA-672) (Erwinia carotovora subsp. atroseptica).